The following is a 446-amino-acid chain: Tetratricopeptide repeat protein 23 (446 aa).

5 TPR repeats span residues 45–78 (LRLSEEKAKSYASSHEYKKALHELVHCMALTRIC), 137–170 (VELFHTLGQALLSLQKFKEASKNLTKAEILSKEM), 186–219 (ARIKLSFAQVYQGQKKSKEALPHYQEALEYTEIS), 310–347 (TAKFLSIQDDYCHFLQVTGQDEKATSIFRESLEAKVAV), and 356–389 (AETYRLLGVADLAQGNQTGAHKKLKKCLQIQTLL). A disordered region spans residues 410 to 446 (APEVPARPRPSPGAKAAFCAGGRPYSVPGRTRPSAAD).

As to quaternary structure, associated with the EvC complex composed of EFCAB7, IQCE, EVC2 and EVC.

The protein resides in the cell projection. It localises to the cilium. In terms of biological role, participates positively in the ciliary Hedgehog (Hh) signaling. The protein is Tetratricopeptide repeat protein 23 (TTC23) of Bos taurus (Bovine).